Here is a 326-residue protein sequence, read N- to C-terminus: Biotin synthase (326 aa).

Positions 51 to 275 (NAVQRSTLLS…MMPTSFVRLS (225 aa)) constitute a Radical SAM core domain. [4Fe-4S] cluster is bound by residues C66, C70, and C73. [2Fe-2S] cluster contacts are provided by C110, C141, C201, and R273.

The protein belongs to the radical SAM superfamily. Biotin synthase family. Homodimer. It depends on [4Fe-4S] cluster as a cofactor. The cofactor is [2Fe-2S] cluster.

The catalysed reaction is (4R,5S)-dethiobiotin + (sulfur carrier)-SH + 2 reduced [2Fe-2S]-[ferredoxin] + 2 S-adenosyl-L-methionine = (sulfur carrier)-H + biotin + 2 5'-deoxyadenosine + 2 L-methionine + 2 oxidized [2Fe-2S]-[ferredoxin]. Its pathway is cofactor biosynthesis; biotin biosynthesis; biotin from 7,8-diaminononanoate: step 2/2. In terms of biological role, catalyzes the conversion of dethiobiotin (DTB) to biotin by the insertion of a sulfur atom into dethiobiotin via a radical-based mechanism. This is Biotin synthase from Aromatoleum aromaticum (strain DSM 19018 / LMG 30748 / EbN1) (Azoarcus sp. (strain EbN1)).